We begin with the raw amino-acid sequence, 1351 residues long: Alpha-latrotoxin-Lh1a (1351 aa).

The signal sequence occupies residues 1–7; the sequence is SLVRMRR. Residues 4–7 form a furin-like endopeptidase recognition region region; the sequence is RMRR. Positions 226-245 are helix H8 is the probable transmembrane region of the tetrameric pore inserted in the target cell membrane; sequence VLYALLYGTQTYVSVMFFLL. A disulfide bridge connects residues cysteine 401 and cysteine 1054. ANK repeat units lie at residues 446 to 477, 478 to 509, 513 to 542, 547 to 577, 581 to 610, 614 to 644, 648 to 678, 683 to 711, 717 to 746, 750 to 779, 783 to 812, 816 to 846, 850 to 879, 883 to 912, 916 to 945, 959 to 991, 992 to 1019, 1023 to 1052, 1056 to 1085, 1089 to 1119, 1125 to 1154, and 1158 to 1187; these read LYNT…ATFE, QGRT…ELNQ, KGYT…SINS, FLQT…NINE, DGFT…DLNA, KGLT…DVNA, NNMT…NADV, GLLS…NVNV, GGIT…NIEQ, EKYT…NFEA, SGAT…NWRD, NGQM…VLDI, NSDT…DINT, TGHA…NVYI, DGIN…KFEW, EECA…GNFA, ICGP…DLNV, KPDT…KVNH, NGMT…DFRR, LGAT…DIDI, DKET…DMTI, and YDKT…KFRR. The segment at 1184 to 1187 is furin-like endopeptidase recognition region; sequence KFRR. The propeptide occupies 1188–1351; that stretch reads EYKSSYGEHS…LGSVIMNSHS (164 aa).

The protein belongs to the cationic peptide 01 (latrotoxin) family. 03 (alpha-latrotoxin) subfamily. As to quaternary structure, homotetramer in membranes. Processed by furin-like proteases at both the N- and C-termini. Expressed in venom gland, cephalothorax, and abdomen tissues from both males and females.

The protein localises to the secreted. It is found in the target cell membrane. Its function is as follows. Presynaptic neurotoxin that causes massive release of neurotransmitters from vertebrate (but not invertebrate) nerve terminals and endocrine cells via a complex mechanism involving activation of receptor(s) and toxin insertion into the plasma membrane with subsequent pore formation. Binds to neurexin-1-alpha (NRXN1) in a calcium dependent manner, adhesion G protein-coupled receptor L1 (ADGRL1, also termed latrophilin-1 and calcium-independent receptor of latrotoxin (CIRL)), and receptor-type tyrosine-protein phosphatase S (PTPRS), also termed PTP sigma. NRXN1 and PTPRS are suggested to provide a platform for binding and subsequent pore formation events. In contrast, binding to ADGRL1 does not involve oligomerization and channel formation, but direct downstream stimulation of the synaptic fusion machinery. Induces rapid muscle contracture and loss of twitch tension when added to the isolated and indirectly stimulated chick biventer cervicis nerve-muscle preparation. The sequence is that of Alpha-latrotoxin-Lh1a from Latrodectus hasselti (Redback spider).